The following is a 146-amino-acid chain: Hemoglobin subunit beta (146 aa).

The Globin domain occupies 2–146 (HWTAEEKQLI…VAHALARKYH (145 aa)). Heme b contacts are provided by His63 and His92.

The protein belongs to the globin family. As to quaternary structure, heterotetramer of two alpha chains and two beta chains. In terms of tissue distribution, red blood cells.

In terms of biological role, involved in oxygen transport from the lung to the various peripheral tissues. The protein is Hemoglobin subunit beta (HBB) of Branta canadensis (Canada goose).